The chain runs to 604 residues: Microtubule-associated protein 70-4 (604 aa).

The segment at 1 to 33 is disordered; sequence MEERGFMSPSLAISASYREGGSKGMSRRRSMRP. The stretch at 49–351 forms a coiled coil; that stretch reads DPVRIELNRL…ADRAAKSEAQ (303 aa). A required for targeting to microtubules region spans residues 233 to 470; that stretch reads IIDKMHRQKV…PLNHKSSEGT (238 aa). Disordered regions lie at residues 367–422 and 434–495; these read LKGP…RSLT and GTSR…NDSV. Residues 371-385 are compositionally biased toward low complexity; it reads TSSSSRGTSVGRSSS. Polar residues-rich tracts occupy residues 401–422 and 468–478; these read PKIT…RSLT and EGTSRGESPSS. A coiled-coil region spans residues 521-569; it reads LRDKDEAIEMLAKKVETLTKAMDVEAKKMRREVAVMGKEVAAMRVVDKG.

Belongs to the MAP70 family.

The protein localises to the cytoplasm. The protein resides in the cytoskeleton. Plant-specific protein that interact with microtubules. The protein is Microtubule-associated protein 70-4 (MAP70.4) of Arabidopsis thaliana (Mouse-ear cress).